Consider the following 347-residue polypeptide: MSEQAIRLTQYSHGAGCGCKISPKVLETILHSEQAKFVDPNLLVGNETRDDAAVYDLGNGTSIISTTDFFMPIVDNPFDFGRIAATNAISDIFAMGGKPIMAIAILGWPINTLSPDIAREVTEGGRFACRQAGIALAGGHSIDAPEPIFGLAVTGVVPTERVKKNSTAQAGCKLFLTKPLGIGVLTTAEKKSLLKPEHQGLATEVMCRMNVAGAAFANIDGVKAMTDVTGFGLLGHLSEMCQGAGVQALLCYQDIPKLPGVEEYIALGAVPGGTERNFASYGHLMGDMSREVRSLLCDPQTSGGLLLAVTPDAEDDVKATAAEFGIDLTAIGELVEARGGRAMVEIR.

C17 is a catalytic residue. ATP-binding positions include K20 and 48–50 (TRD). A Mg(2+)-binding site is contributed by D51. Residues D68, D91, and 139–141 (GHS) each bind ATP. D91 contributes to the Mg(2+) binding site. D227 is a Mg(2+) binding site.

It belongs to the selenophosphate synthase 1 family. Class I subfamily. As to quaternary structure, homodimer. Mg(2+) serves as cofactor.

It catalyses the reaction hydrogenselenide + ATP + H2O = selenophosphate + AMP + phosphate + 2 H(+). Functionally, synthesizes selenophosphate from selenide and ATP. This Salmonella typhimurium (strain LT2 / SGSC1412 / ATCC 700720) protein is Selenide, water dikinase.